The sequence spans 28 residues: Sarcolamban A (28 aa).

Residues 7-27 form a helical membrane-spanning segment; sequence LFTTFGILAILLFFLYLIYAV.

In terms of assembly, interacts with SERCA. As to expression, strongly expressed in embryonic and larval somatic muscles and postembryonic heart.

It localises to the sarcoplasmic reticulum membrane. It is found in the cell membrane. Its subcellular location is the sarcolemma. The protein localises to the T-tubule. In terms of biological role, plays an essential role in the regulation of calcium transport at the sarcoplasmic reticulum (SR), which is secondarily required for regular muscle contraction. The sequence is that of Sarcolamban A from Drosophila melanogaster (Fruit fly).